The following is a 498-amino-acid chain: Angiopoietin-1 (498 aa).

A signal peptide spans 1–19 (MTVFLSFAFLAAILTHIGC). N-linked (GlcNAc...) asparagine glycosylation is found at N92, N122, N154, N243, and N295. Residues 158–254 (RLEIQLLENS…SVLQKQQLEL (97 aa)) adopt a coiled-coil conformation. In terms of domain architecture, Fibrinogen C-terminal spans 277-497 (KEEVKPFRDC…STTMMIRPLD (221 aa)). Cystine bridges form between C286–C315 and C439–C452.

As to quaternary structure, homooligomer. Interacts with TEK/TIE2. Interacts with SVEP1/polydom. Interacts with THBD; this interaction significantly inhibits the generation of activated PC and TAFIa/CPB2 by the thrombin/thrombomodulin complex.

The protein resides in the secreted. In terms of biological role, binds and activates TIE2 receptor by inducing its tyrosine phosphorylation. Implicated in endothelial developmental processes later and distinct from that of VEGF. Appears to play a crucial role in mediating reciprocal interactions between the endothelium and surrounding matrix and mesenchyme. Mediates blood vessel maturation/stability. It may play an important role in the heart early development. This is Angiopoietin-1 (ANGPT1) from Sus scrofa (Pig).